The sequence spans 262 residues: Tropinone reductase homolog At2g29290 (262 aa).

Leucine 13–histidine 37 lines the NADP(+) pocket. A substrate-binding site is contributed by serine 146. Residue tyrosine 159 is the Proton acceptor of the active site.

Belongs to the short-chain dehydrogenases/reductases (SDR) family. SDR65C subfamily.

This chain is Tropinone reductase homolog At2g29290, found in Arabidopsis thaliana (Mouse-ear cress).